Here is a 285-residue protein sequence, read N- to C-terminus: Phospholipid phosphatase 1 (285 aa).

Topologically, residues 1–6 (MFDKTR) are cytoplasmic. Positions 5–7 (TRL) match the PDZ-binding; involved in localization to the apical cell membrane motif. Residues 7–27 (LPYVALDVLCVLLAGLPFAIL) form a helical membrane-spanning segment. Residues 28–53 (TSRHTPFQRGLFCNDESIKYPYKEDT) are Extracellular-facing. A helical membrane pass occupies residues 54–74 (IPYPLLGGIIIPFSIIVMIVG). Over 75 to 94 (ETLSVYFNLLHSNSFIRNNY) the chain is Cytoplasmic. The chain crosses the membrane as a helical span at residues 95–115 (IATIYKAIGTFLFGAAASQSL). At 116–164 (TDIAKYSIGRLRPHFLDVCDPDWSKINCSDGYIENYICRGNAQKVKEGR) the chain is on the extracellular side. The segment at 120-128 (KYSIGRLRP) is phosphatase sequence motif I. N-linked (GlcNAc...) asparagine glycosylation occurs at Asn142. The helical transmembrane segment at 165–185 (LSFYSGHSSFSMYCMLFVALY) threads the bilayer. The phosphatase sequence motif II stretch occupies residues 168-171 (YSGH). Catalysis depends on His171, which acts as the Proton donors. The Cytoplasmic portion of the chain corresponds to 186-196 (LQARMKGDWAR). Residues 197–216 (LLRPTLQFGLVAVSIYVGLS) traverse the membrane as a helical segment. The phosphatase sequence motif III stretch occupies residues 216–227 (SRVSDYKHHWSD). Topologically, residues 217 to 229 (RVSDYKHHWSDVL) are extracellular. The active-site Nucleophile is the His223. The helical transmembrane segment at 230–250 (TGLIQGALVAIVVAVYVSDFF) threads the bilayer. Over 251 to 285 (KERNSPFKERKEEDSHTTLHETPTTGNHYRNSHQP) the chain is Cytoplasmic. Residues 257-269 (FKERKEEDSHTTL) are compositionally biased toward basic and acidic residues. The tract at residues 257-285 (FKERKEEDSHTTLHETPTTGNHYRNSHQP) is disordered. The segment covering 270-285 (HETPTTGNHYRNSHQP) has biased composition (polar residues).

The protein belongs to the PA-phosphatase related phosphoesterase family. Forms functional homodimers and homooligomers that are not required for substrate recognition and catalytic activity. Can also form heterooligomers with PLPP2 and PLPP3. In terms of processing, N-glycosylated. N-linked sugars are of the complex type. N-glycosylation is not required for the phosphatase activity.

Its subcellular location is the cell membrane. It localises to the apical cell membrane. It is found in the membrane raft. The protein resides in the membrane. The protein localises to the caveola. It carries out the reaction a 1,2-diacyl-sn-glycero-3-phosphate + H2O = a 1,2-diacyl-sn-glycerol + phosphate. The enzyme catalyses 1,2-dihexadecanoyl-sn-glycero-3-phosphate + H2O = 1,2-dihexadecanoyl-sn-glycerol + phosphate. The catalysed reaction is 1,2-di-(9Z-octadecenoyl)-sn-glycero-3-phosphate + H2O = 1,2-di-(9Z-octadecenoyl)-sn-glycerol + phosphate. It catalyses the reaction a monoacyl-sn-glycero-3-phosphate + H2O = a monoacylglycerol + phosphate. It carries out the reaction (9Z)-octadecenoyl-sn-glycero-3-phosphate + H2O = (9Z-octadecenoyl)-glycerol + phosphate. The enzyme catalyses a 1-acyl-sn-glycero-3-phosphate + H2O = a 1-acyl-sn-glycerol + phosphate. The catalysed reaction is 1-(9Z-octadecenoyl)-sn-glycero-3-phosphate + H2O = 1-(9Z-octadecenoyl)-sn-glycerol + phosphate. It catalyses the reaction a 1,2-diacyl-sn-glycerol 3-diphosphate + H2O = a 1,2-diacyl-sn-glycero-3-phosphate + phosphate + H(+). It carries out the reaction sphing-4-enine 1-phosphate + H2O = sphing-4-enine + phosphate. The enzyme catalyses an N-acylsphing-4-enine 1-phosphate + H2O = an N-acylsphing-4-enine + phosphate. The catalysed reaction is N-(octanoyl)-sphing-4-enine-1-phosphate + H2O = N-octanoylsphing-4-enine + phosphate. It catalyses the reaction N-(9Z-octadecenoyl)-ethanolamine phosphate + H2O = N-(9Z-octadecenoyl) ethanolamine + phosphate. It carries out the reaction 1-hexadecanoyl-2-(9Z-octadecenoyl)-sn-glycero-3-phosphate + H2O = 1-hexadecanoyl-2-(9Z-octadecenoyl)-sn-glycerol + phosphate. It participates in lipid metabolism; phospholipid metabolism. Its activity is regulated as follows. Magnesium-independent phospholipid phosphatase. Insensitive to N-ethylmaleimide. Magnesium-independent phospholipid phosphatase of the plasma membrane that catalyzes the dephosphorylation of a variety of glycerolipid and sphingolipid phosphate esters including phosphatidate/PA, lysophosphatidate/LPA, diacylglycerol pyrophosphate/DGPP, sphingosine 1-phosphate/S1P and ceramide 1-phosphate/C1P. Also acts on N-oleoyl ethanolamine phosphate/N-(9Z-octadecenoyl)-ethanolamine phosphate, a potential physiological compound. Through its extracellular phosphatase activity allows both the hydrolysis and the cellular uptake of these bioactive lipid mediators from the milieu, regulating signal transduction in different cellular processes. It is for instance essential for the extracellular hydrolysis of S1P and subsequent conversion into intracellular S1P. Involved in the regulation of inflammation, platelets activation, cell proliferation and migration among other processes. May also have an intracellular activity to regulate phospholipid-mediated signaling pathways. The sequence is that of Phospholipid phosphatase 1 from Sus scrofa (Pig).